The sequence spans 379 residues: DnaJ homolog subfamily B member 14 (379 aa).

Residues 1–244 (MEGNRDEAEK…GHEREEERAD (244 aa)) lie on the Cytoplasmic side of the membrane. Positions 56–90 (TAGSSTHCRKPPGSSDQSKPSCGKDGTSGAGEGGK) are disordered. The 65-residue stretch at 108–172 (NYYEVLGVTK…EKRKQYDLTG (65 aa)) folds into the J domain. The helical transmembrane segment at 245-265 (GGFSVFIQLMPIIVLILVSLL) threads the bilayer. Over 266 to 379 (SQLMVSNPPY…ERLTSLYKGG (114 aa)) the chain is Lumenal.

It belongs to the DnaJ family. DNAJB12/DNAJB14 subfamily. In terms of assembly, interacts (via J domain) with HSPA8/Hsc70. Forms a multiprotein complex, at least composed of DNAJB12, DNAJB14, HSPA8/Hsc70 and SGTA; interaction with DNAJB14 and HSPA8/Hsc70 is direct.

The protein resides in the endoplasmic reticulum membrane. It localises to the nucleus membrane. Functionally, acts as a co-chaperone with HSPA8/Hsc70; required to promote protein folding and trafficking, prevent aggregation of client proteins, and promote unfolded proteins to endoplasmic reticulum-associated degradation (ERAD) pathway. Acts by determining HSPA8/Hsc70's ATPase and polypeptide-binding activities. Can also act independently of HSPA8/Hsc70: together with DNAJB12, acts as a chaperone that promotes maturation of potassium channels KCND2 and KCNH2 by stabilizing nascent channel subunits and assembling them into tetramers. While stabilization of nascent channel proteins is dependent on HSPA8/Hsc70, the process of oligomerization of channel subunits is independent of HSPA8/Hsc70. When overexpressed, forms membranous structures together with DNAJB12 and HSPA8/Hsc70 within the nucleus; the role of these structures, named DJANGOs, is still unclear. This Mus musculus (Mouse) protein is DnaJ homolog subfamily B member 14.